Reading from the N-terminus, the 529-residue chain is Delayed-rectifier potassium channel regulatory subunit KCNS1 (529 aa).

The Cytoplasmic segment spans residues 1–217 (MLMLLVRGTH…LTMENPGYSL (217 aa)). The chain crosses the membrane as a helical span at residues 218-239 (PSKLFSCVSISVVLASIAAMCI). Residues 240 to 270 (HSLPEYQAREAAAAVAAVAAGRSPEGVRDDP) lie on the Extracellular side of the membrane. Residues 271-293 (VLRRLEYFCIAWFSFEVSSRLLL) form a helical membrane-spanning segment. At 294-304 (APSTRNFFCHP) the chain is on the cytoplasmic side. A helical membrane pass occupies residues 305–322 (LNLIDIVSVLPFYLTLLA). Topologically, residues 323-340 (GVALGDQGGTGGKELGHL) are extracellular. The chain crosses the membrane as a helical; Voltage-sensor span at residues 341–361 (GKVVQVFRLMRIFRVLKLARH). Residues 362–376 (STGLRSLGATLKHSY) lie on the Cytoplasmic side of the membrane. A helical transmembrane segment spans residues 377–398 (REVGILLLYLAVGVSVFSGVAY). The Extracellular portion of the chain corresponds to 399 to 411 (TAEKEEDVGFNTI). Residues 412 to 423 (PACWWWGTVSMT) constitute an intramembrane region (helical). The short motif at 424–429 (TVGYGD) is the Selectivity filter element. The stretch at 424–431 (TVGYGDVV) is an intramembrane region. Over 432–438 (PVTVAGK) the chain is Extracellular. The chain crosses the membrane as a helical span at residues 439–467 (LAASGCILGGILVVALPITIIFNKFSHFY). At 468-529 (RRQKALEAAV…PSEPPHPQMY (62 aa)) the chain is on the cytoplasmic side. The disordered stretch occupies residues 494–529 (GVSEASLETSRETSQEGRSADLETQAPSEPPHPQMY). The span at 502-514 (TSRETSQEGRSAD) shows a compositional bias: basic and acidic residues.

Belongs to the potassium channel family. S (TC 1.A.1.2) subfamily. Kv9.1/KCNS1 sub-subfamily. As to quaternary structure, heterotetramer with KCNB1. Heterotetramer with KCNB2. Does not form homomultimers.

The protein localises to the cell membrane. Potassium channel regulatory subunit that modulate the delayed rectifier voltage-gated potassium channel activity of KCNB1 and KCNB2 by altering their kinetics, expression levels, and shifting the half-inactivation potential to more polarized values. While it does not form functional channels on its own, it can form functional heterotetrameric channels with KCNB1 and KCNB2. Each regulatory subunit has unique regulatory properties that can lead to extensive inhibition, significant changes in kinetics, and/or substantial shifts in the voltage dependencies of the inactivation process. In Chlorocebus aethiops (Green monkey), this protein is Delayed-rectifier potassium channel regulatory subunit KCNS1.